Reading from the N-terminus, the 162-residue chain is Shikimate kinase (162 aa).

Residue 11-16 (GSGKSS) coordinates ATP. S15 contributes to the Mg(2+) binding site. The substrate site is built by D33, R57, and G80. Residue R116 participates in ATP binding. Substrate is bound at residue R132.

It belongs to the shikimate kinase family. Monomer. Mg(2+) is required as a cofactor.

Its subcellular location is the cytoplasm. It carries out the reaction shikimate + ATP = 3-phosphoshikimate + ADP + H(+). It participates in metabolic intermediate biosynthesis; chorismate biosynthesis; chorismate from D-erythrose 4-phosphate and phosphoenolpyruvate: step 5/7. Functionally, catalyzes the specific phosphorylation of the 3-hydroxyl group of shikimic acid using ATP as a cosubstrate. The protein is Shikimate kinase of Helicobacter acinonychis (strain Sheeba).